We begin with the raw amino-acid sequence, 395 residues long: Elongation factor Tu (395 aa).

The tr-type G domain maps to 10-205 (KPHCNIGTIG…AVDSYIPQPE (196 aa)). The segment at 19–26 (GHVDHGKT) is G1. A GTP-binding site is contributed by 19–26 (GHVDHGKT). Residue Thr-26 participates in Mg(2+) binding. A G2 region spans residues 60–64 (GITIA). Residues 81–84 (DCPG) are G3. Residues 81 to 85 (DCPGH) and 136 to 139 (NKMD) each bind GTP. Residues 136–139 (NKMD) form a G4 region. The tract at residues 173–175 (SAL) is G5.

This sequence belongs to the TRAFAC class translation factor GTPase superfamily. Classic translation factor GTPase family. EF-Tu/EF-1A subfamily. As to quaternary structure, monomer.

The protein localises to the cytoplasm. The enzyme catalyses GTP + H2O = GDP + phosphate + H(+). GTP hydrolase that promotes the GTP-dependent binding of aminoacyl-tRNA to the A-site of ribosomes during protein biosynthesis. The sequence is that of Elongation factor Tu from Acidiphilium cryptum (strain JF-5).